The primary structure comprises 646 residues: Vitamin K-dependent protein S (646 aa).

Residues 1–12 (GHASQVLVRKRR) constitute a propeptide that is removed on maturation. The Gla domain occupies 13–58 (ANSMLEETKKGNLERECIEELCNKEEAREVFENDPETDYFYPKYLG). Glu-18, Glu-19, Glu-26, Glu-28, Glu-31, Glu-32, Glu-37, Glu-38, Glu-41, Glu-44, and Glu-48 each carry 4-carboxyglutamate. Cys-29 and Cys-34 are disulfide-bonded. Residues 59-87 (CLGSFRAKLFTATRRSANGYPDLRSCVNA) form a thrombin-sensitive region. An EGF-like 1 domain is found at 88-126 (IPDQCNPLPCSEEGYLNCKDGQATFTCICKPGWQGEKCE). Cystine bridges form between Cys-92–Cys-105, Cys-97–Cys-114, Cys-116–Cys-125, Cys-132–Cys-146, Cys-142–Cys-155, Cys-157–Cys-170, Cys-176–Cys-188, Cys-183–Cys-197, Cys-199–Cys-212, Cys-218–Cys-227, Cys-223–Cys-236, Cys-238–Cys-253, and Cys-420–Cys-446. Asp-107 carries the (3R)-3-hydroxyaspartate modification. Residues 128 to 171 (DINECKDPTNINGGCSQICDNTAGSYHCSCKSGFVMLANEKDCK) enclose the EGF-like 2; calcium-binding domain. In terms of domain architecture, EGF-like 3; calcium-binding spans 172 to 213 (DMDECSVKPSVCGTAVCKNTPGDFECECSEGYRYNPTAKSCE). One can recognise an EGF-like 4; calcium-binding domain in the interval 214–254 (DIDECSENMCAQLCVNYPGGYSCYCDGKKGFKLAQDKKSCE). 2 Laminin G-like domains span residues 270–446 (LLYL…KKHC) and 455–636 (YYPG…AHSC). Asn-470 and Asn-480 each carry an N-linked (GlcNAc...) asparagine glycan. An intrachain disulfide couples Cys-609 to Cys-636.

As to quaternary structure, interacts with C4b-binding protein, a regulator of the complex system. In rabbit plasma however, protein S appears to be present only in free form. The iron and 2-oxoglutarate dependent 3-hydroxylation of aspartate and asparagine is (R) stereospecific within EGF domains. In terms of tissue distribution, plasma.

It is found in the secreted. In terms of biological role, anticoagulant plasma protein; it is a cofactor to activated protein C in the degradation of coagulation factors Va and VIIIa. It helps to prevent coagulation and stimulating fibrinolysis. This Oryctolagus cuniculus (Rabbit) protein is Vitamin K-dependent protein S (PROS1).